The sequence spans 306 residues: MSNEFINFEKISRESWKTLHQKAKALLTQEELKSITSLNDNISINDVIDIYLPLINLIQVYKIAQENLSFSKSLFLKKDIQLRPFIIGISGSVAVGKSTTSRLLQLLLSRTHPNSQVELVTTDGFLYPNQFLIEQGLLNRKGFPESYNMELLLDFLDSIKNGQTAFAPVYSHDIYDIIPNQKQSFNNPDFLIVEGINVFQNQQNNRLYMSDYFDFSIYIDADSSHIETWYIERFLSILKLAKRDPHNYYAQYAQLPRSEAIAFARNVWKNVNLENLEKFIEPTRNRAELILHKSADHKIDEIYLKK.

91 to 98 (GSVAVGKS) lines the ATP pocket.

The protein belongs to the prokaryotic pantothenate kinase family.

The protein resides in the cytoplasm. The catalysed reaction is (R)-pantothenate + ATP = (R)-4'-phosphopantothenate + ADP + H(+). It functions in the pathway cofactor biosynthesis; coenzyme A biosynthesis; CoA from (R)-pantothenate: step 1/5. In Streptococcus pyogenes serotype M5 (strain Manfredo), this protein is Pantothenate kinase.